Consider the following 333-residue polypeptide: tRNA(Ile)-lysidine synthase (333 aa).

25–30 (SGGPDS) is an ATP binding site.

It belongs to the tRNA(Ile)-lysidine synthase family.

It localises to the cytoplasm. The catalysed reaction is cytidine(34) in tRNA(Ile2) + L-lysine + ATP = lysidine(34) in tRNA(Ile2) + AMP + diphosphate + H(+). Functionally, ligates lysine onto the cytidine present at position 34 of the AUA codon-specific tRNA(Ile) that contains the anticodon CAU, in an ATP-dependent manner. Cytidine is converted to lysidine, thus changing the amino acid specificity of the tRNA from methionine to isoleucine. This is tRNA(Ile)-lysidine synthase from Ureaplasma parvum serovar 3 (strain ATCC 700970).